A 717-amino-acid chain; its full sequence is MIHAGNAITVQMLSDGIAEFRFDLQGESVNKFNRATIEDFQAAIEAVKNHPEVKGLIVTSAKSTFIVGADITEFGQNFAQGEKAIVEWALPVHDIFNSFEDLDIPKVAAINGMALGGGFEMCLVCDYRVMSDQAQVGLPEIKLGIFPGFGGTVRLSRLIGIDNAVEWIAMAAPKKPAAALKDGAVDAVVSADKLQEAAIDLVKQALAGRVDWKAKRQEKLNPVKLNPLEQMMAFNTAKGAVLAKANPAQYPAPKLMLDSLQAGASLGRDEALKVETEGFAKAAITPQAEALIGLFLNDQIIKKTSKKHEKGAHPVNQAAVLGAGIMGGGIAYQAASKGTPIIMKDIGNPQLALGMQEANGLLTKQVERKKLTPAKMGETLARIRPTLSYDEFKEVDIVIEAVTENPKIKEAVLADTEAKVRDNTIIASNTSTISITRLAKALKRPENFVGMHFFNPVHMMPLVEVIRGEQTSEEAVATTVVLAQKMGKTPIVVNDCPGFLVNRVLFPYFGAFDLLLKDGADFQQIDKVMEKFGWPMGPAYLMDVVGIDTGVHGAEVMAEGFPDRMKPDYKGSIQTMYEAKRLGQKNDVGFYKYELDKKGKKAKTVDSTAYEVIAPVVTSEKREFDAQEIIDRMMLALCNETVRCLEDNIVATPAEADMAMIMGIGFPPFRGGPCRYIDQTGVAEYVALCNKYAHLGKAYEAPQLLRDMAENNKKFYG.

Residues 1–190 (MIHAGNAITV…KDGAVDAVVS (190 aa)) form an enoyl-CoA hydratase/isomerase region. D298 serves as a coordination point for substrate. A 3-hydroxyacyl-CoA dehydrogenase region spans residues 313–717 (HPVNQAAVLG…MAENNKKFYG (405 aa)). NAD(+) is bound by residues M326, D345, 402–404 (VTE), K409, and S431. Residue H452 is the For 3-hydroxyacyl-CoA dehydrogenase activity of the active site. Residue N455 coordinates NAD(+). N502 lines the substrate pocket.

It in the N-terminal section; belongs to the enoyl-CoA hydratase/isomerase family. The protein in the C-terminal section; belongs to the 3-hydroxyacyl-CoA dehydrogenase family. In terms of assembly, heterotetramer of two alpha chains (FadB) and two beta chains (FadA).

The catalysed reaction is a (3S)-3-hydroxyacyl-CoA + NAD(+) = a 3-oxoacyl-CoA + NADH + H(+). It carries out the reaction a (3S)-3-hydroxyacyl-CoA = a (2E)-enoyl-CoA + H2O. The enzyme catalyses a 4-saturated-(3S)-3-hydroxyacyl-CoA = a (3E)-enoyl-CoA + H2O. It catalyses the reaction (3S)-3-hydroxybutanoyl-CoA = (3R)-3-hydroxybutanoyl-CoA. The catalysed reaction is a (3Z)-enoyl-CoA = a 4-saturated (2E)-enoyl-CoA. It carries out the reaction a (3E)-enoyl-CoA = a 4-saturated (2E)-enoyl-CoA. It functions in the pathway lipid metabolism; fatty acid beta-oxidation. Involved in the aerobic and anaerobic degradation of long-chain fatty acids via beta-oxidation cycle. Catalyzes the formation of 3-oxoacyl-CoA from enoyl-CoA via L-3-hydroxyacyl-CoA. It can also use D-3-hydroxyacyl-CoA and cis-3-enoyl-CoA as substrate. The sequence is that of Fatty acid oxidation complex subunit alpha from Acinetobacter baylyi (strain ATCC 33305 / BD413 / ADP1).